Reading from the N-terminus, the 167-residue chain is CS6 fimbrial subunit B (167 aa).

The N-terminal stretch at 1–21 (MLKKIISAIALIAGTSGVVNA) is a signal peptide.

It is found in the fimbrium. The chain is CS6 fimbrial subunit B (cssB) from Escherichia coli.